The chain runs to 507 residues: Glycosyltransferase family 92 protein C33H5.2 (507 aa).

A helical transmembrane segment spans residues 6 to 26 (VILVFCASFALFFTFIIFGRY). The 290-residue stretch at 155-444 (RDVVMCIAPL…LKCYNEKFYD (290 aa)) folds into the GT92 domain.

This sequence belongs to the glycosyltransferase 92 family.

It is found in the membrane. In Caenorhabditis elegans, this protein is Glycosyltransferase family 92 protein C33H5.2.